The following is a 430-amino-acid chain: Tol-Pal system protein TolB (430 aa).

An N-terminal signal peptide occupies residues 1–21 (MKQALRVAFGFLILWASVLHA).

Belongs to the TolB family. The Tol-Pal system is composed of five core proteins: the inner membrane proteins TolA, TolQ and TolR, the periplasmic protein TolB and the outer membrane protein Pal. They form a network linking the inner and outer membranes and the peptidoglycan layer.

The protein resides in the periplasm. Functionally, part of the Tol-Pal system, which plays a role in outer membrane invagination during cell division and is important for maintaining outer membrane integrity. TolB occupies a key intermediary position in the Tol-Pal system because it communicates directly with both membrane-embedded components, Pal in the outer membrane and TolA in the inner membrane. The protein is Tol-Pal system protein TolB of Shigella flexneri.